A 420-amino-acid chain; its full sequence is Tol-Pal system protein TolB (420 aa).

The first 21 residues, Met1–Ala21, serve as a signal peptide directing secretion.

The protein belongs to the TolB family. In terms of assembly, the Tol-Pal system is composed of five core proteins: the inner membrane proteins TolA, TolQ and TolR, the periplasmic protein TolB and the outer membrane protein Pal. They form a network linking the inner and outer membranes and the peptidoglycan layer.

Its subcellular location is the periplasm. In terms of biological role, part of the Tol-Pal system, which plays a role in outer membrane invagination during cell division and is important for maintaining outer membrane integrity. The sequence is that of Tol-Pal system protein TolB from Wolbachia pipientis wMel.